A 187-amino-acid chain; its full sequence is MSKFVKTAIAAAMVMGAFTSTATIAAGNNGTARFYGTIEDSVCSIVPDDHKLEVDMGDIGAEKLKNNGTTTPKNFQIRLQDCVFDTQETMTTTFTGTVSSANSGNYYTIFNTDTGAAFNNVSLAIGDSLGTSYKSGMGIDQKIVKDTATNKGKAKQTLNFKAWLVGAADAPDLGNFEANTTFQITYL.

The first 25 residues, 1–25 (MSKFVKTAIAAAMVMGAFTSTATIA), serve as a signal peptide directing secretion.

The protein belongs to the fimbrial protein family.

Its function is as follows. Part of the yfcOPQRSUV fimbrial operon. Could contribute to adhesion to various surfaces in specific environmental niches. Increases adhesion to eukaryotic T24 bladder epithelial cells in the absence of fim genes. This is an uncharacterized protein from Escherichia coli (strain K12).